The sequence spans 127 residues: Small ribosomal subunit protein bS6 (127 aa).

It belongs to the bacterial ribosomal protein bS6 family.

Its function is as follows. Binds together with bS18 to 16S ribosomal RNA. The sequence is that of Small ribosomal subunit protein bS6 from Acinetobacter baumannii (strain AB0057).